The following is a 180-amino-acid chain: ATP synthase subunit delta (180 aa).

It belongs to the ATPase delta chain family. As to quaternary structure, F-type ATPases have 2 components, F(1) - the catalytic core - and F(0) - the membrane proton channel. F(1) has five subunits: alpha(3), beta(3), gamma(1), delta(1), epsilon(1). F(0) has three main subunits: a(1), b(2) and c(10-14). The alpha and beta chains form an alternating ring which encloses part of the gamma chain. F(1) is attached to F(0) by a central stalk formed by the gamma and epsilon chains, while a peripheral stalk is formed by the delta and b chains.

It is found in the cell inner membrane. Functionally, f(1)F(0) ATP synthase produces ATP from ADP in the presence of a proton or sodium gradient. F-type ATPases consist of two structural domains, F(1) containing the extramembraneous catalytic core and F(0) containing the membrane proton channel, linked together by a central stalk and a peripheral stalk. During catalysis, ATP synthesis in the catalytic domain of F(1) is coupled via a rotary mechanism of the central stalk subunits to proton translocation. In terms of biological role, this protein is part of the stalk that links CF(0) to CF(1). It either transmits conformational changes from CF(0) to CF(1) or is implicated in proton conduction. The protein is ATP synthase subunit delta of Acidovorax sp. (strain JS42).